Here is an 89-residue protein sequence, read N- to C-terminus: Small ribosomal subunit protein uS15 (89 aa).

Belongs to the universal ribosomal protein uS15 family. In terms of assembly, part of the 30S ribosomal subunit. Forms a bridge to the 50S subunit in the 70S ribosome, contacting the 23S rRNA.

One of the primary rRNA binding proteins, it binds directly to 16S rRNA where it helps nucleate assembly of the platform of the 30S subunit by binding and bridging several RNA helices of the 16S rRNA. Its function is as follows. Forms an intersubunit bridge (bridge B4) with the 23S rRNA of the 50S subunit in the ribosome. The chain is Small ribosomal subunit protein uS15 from Anaeromyxobacter dehalogenans (strain 2CP-1 / ATCC BAA-258).